The following is a 427-amino-acid chain: Dorsalin-1 (427 aa).

Positions 1–20 are cleaved as a signal peptide; that stretch reads MHYFGVLAALSVFNIIACLT. Residues 21–318 constitute a propeptide that is removed on maturation; the sequence is RGKPLENWKK…PRQHSSRSKR (298 aa). Asn-71, Asn-136, Asn-265, and Asn-292 each carry an N-linked (GlcNAc...) asparagine glycan. A disordered region spans residues 288-321; sequence KLGKNDSSSEEEQREEKAIARPRQHSSRSKRSIG. Residues 307 to 321 show a composition bias toward basic residues; that stretch reads ARPRQHSSRSKRSIG. 3 cysteine pairs are disulfide-bonded: Cys-325/Cys-391, Cys-354/Cys-424, and Cys-358/Cys-426.

Belongs to the TGF-beta family. As to quaternary structure, homodimer; disulfide-linked. Expressed selectively in the dorsal neural tube. Lower levels seen in kidney and myotomal cells.

Its subcellular location is the secreted. Its function is as follows. Appears to regulate cell differentiation within the neural tube. May regulate the differentiation of cell types along the dorsoventral axis of the neural tube, acting in conjunction with distinct ventralizing signals from the notochord and floor plate. Controls the cell differentiation in the neural tube in several ways: (1) promotes the differentiation of cell types that derive from the dorsal neural tube. (2) ensures that the dorsal neural tube is refractory to ventralizing species from the notochord. (3) can diffuse and influence the fate of cells in more ventral regions of the neural tube. The protein is Dorsalin-1 (DSL1) of Gallus gallus (Chicken).